The primary structure comprises 276 residues: uncharacterized protein (276 aa).

Positions 20 to 137 (PVLIFIPGAN…PPINTFLPDS (118 aa)) constitute an AB hydrolase-1 domain. The tract at residues 57-76 (GESELTEPLPDSASNPDSDY) is disordered.

This sequence belongs to the AB hydrolase superfamily.

This is an uncharacterized protein from Staphylococcus aureus (strain N315).